We begin with the raw amino-acid sequence, 475 residues long: Ribulose bisphosphate carboxylase large chain (475 aa).

A propeptide spanning residues Met1–Ser2 is cleaved from the precursor. Residue Pro3 is modified to N-acetylproline. Position 14 is an N6,N6,N6-trimethyllysine (Lys14). Substrate contacts are provided by Asn123 and Thr173. The active-site Proton acceptor is Lys175. Position 177 (Lys177) interacts with substrate. The Mg(2+) site is built by Lys201, Asp203, and Glu204. The residue at position 201 (Lys201) is an N6-carboxylysine. His294 serves as the catalytic Proton acceptor. The substrate site is built by Arg295, His327, and Ser379.

It belongs to the RuBisCO large chain family. Type I subfamily. As to quaternary structure, heterohexadecamer of 8 large chains and 8 small chains; disulfide-linked. The disulfide link is formed within the large subunit homodimers. The cofactor is Mg(2+). The disulfide bond which can form in the large chain dimeric partners within the hexadecamer appears to be associated with oxidative stress and protein turnover.

It is found in the plastid. It localises to the chloroplast. It carries out the reaction 2 (2R)-3-phosphoglycerate + 2 H(+) = D-ribulose 1,5-bisphosphate + CO2 + H2O. The enzyme catalyses D-ribulose 1,5-bisphosphate + O2 = 2-phosphoglycolate + (2R)-3-phosphoglycerate + 2 H(+). In terms of biological role, ruBisCO catalyzes two reactions: the carboxylation of D-ribulose 1,5-bisphosphate, the primary event in carbon dioxide fixation, as well as the oxidative fragmentation of the pentose substrate in the photorespiration process. Both reactions occur simultaneously and in competition at the same active site. In Notothixos subaureus (Golden mistletoe), this protein is Ribulose bisphosphate carboxylase large chain.